The primary structure comprises 181 residues: Probable inosine/xanthosine triphosphatase (181 aa).

Aspartate 65 lines the Mg(2+) pocket.

The protein belongs to the YjjX NTPase family. In terms of assembly, homodimer. It depends on Mg(2+) as a cofactor. Requires Mn(2+) as cofactor.

The catalysed reaction is XTP + H2O = XDP + phosphate + H(+). The enzyme catalyses ITP + H2O = IDP + phosphate + H(+). Phosphatase that hydrolyzes non-canonical purine nucleotides such as XTP and ITP to their respective diphosphate derivatives. Probably excludes non-canonical purines from DNA/RNA precursor pool, thus preventing their incorporation into DNA/RNA and avoiding chromosomal lesions. This Caldivirga maquilingensis (strain ATCC 700844 / DSM 13496 / JCM 10307 / IC-167) protein is Probable inosine/xanthosine triphosphatase.